Consider the following 526-residue polypeptide: Amine oxidase [flavin-containing] A (526 aa).

Methionine 1 is subject to N-acetylmethionine. The Cytoplasmic portion of the chain corresponds to 1–497 (MTDLEKPSIT…HTFLERNLPS (497 aa)). Serine 383 is subject to Phosphoserine. Cysteine 406 bears the S-8alpha-FAD cysteine mark. A helical; Anchor for type IV membrane protein membrane pass occupies residues 498 to 518 (VPGLLKITGFSTSVALLCFVL). The Mitochondrial intermembrane portion of the chain corresponds to 519 to 526 (YKFKQPQS). The interaction with membrane phospholipid headgroups stretch occupies residues 520 to 522 (KFK).

It belongs to the flavin monoamine oxidase family. In terms of assembly, monomer, homo- or heterodimer (containing two subunits of similar size). Each subunit contains a covalently bound flavin. Enzymatically active as monomer. It depends on FAD as a cofactor.

It is found in the mitochondrion outer membrane. It carries out the reaction a secondary aliphatic amine + O2 + H2O = a primary amine + an aldehyde + H2O2. The enzyme catalyses a primary methyl amine + O2 + H2O = an aldehyde + H2O2 + NH4(+). The catalysed reaction is serotonin + O2 + H2O = (5-hydroxyindol-3-yl)acetaldehyde + H2O2 + NH4(+). It catalyses the reaction (R)-adrenaline + O2 + H2O = (R)-3,4-dihydroxymandelaldehyde + methylamine + H2O2. It carries out the reaction dopamine + O2 + H2O = 3,4-dihydroxyphenylacetaldehyde + H2O2 + NH4(+). The enzyme catalyses tyramine + O2 + H2O = (4-hydroxyphenyl)acetaldehyde + H2O2 + NH4(+). The catalysed reaction is (R)-noradrenaline + O2 + H2O = (R)-3,4-dihydroxymandelaldehyde + H2O2 + NH4(+). It catalyses the reaction kynuramine + O2 + H2O = 3-(2-aminophenyl)-3-oxopropanal + H2O2 + NH4(+). It carries out the reaction tryptamine + O2 + H2O = indole-3-acetaldehyde + H2O2 + NH4(+). The enzyme catalyses 2-phenylethylamine + O2 + H2O = 2-phenylacetaldehyde + H2O2 + NH4(+). Catalyzes the oxidative deamination of biogenic and xenobiotic amines and has important functions in the metabolism of neuroactive and vasoactive amines in the central nervous system and peripheral tissues. Preferentially oxidizes serotonin. Also catalyzes the oxidative deamination of kynuramine to 3-(2-aminophenyl)-3-oxopropanal that can spontaneously condense to 4-hydroxyquinoline. This is Amine oxidase [flavin-containing] A from Mus musculus (Mouse).